We begin with the raw amino-acid sequence, 469 residues long: Neuraminidase (469 aa).

The Intravirion portion of the chain corresponds to 1 to 9; the sequence is MNPNQKIIT. The helical transmembrane segment at 10–30 threads the bilayer; sequence IGSVSLTIATICFLMQIAILV. Residues 11–33 are involved in apical transport and lipid raft association; the sequence is GSVSLTIATICFLMQIAILVTTV. The Virion surface portion of the chain corresponds to 31 to 469; that stretch reads TTVTLHFKQY…DGADINLMPI (439 aa). Residues 36 to 88 form a hypervariable stalk region region; sequence HFKQYECSSPPNNQVMPCEPIIIERNITEIVYLTNTTIDKEICPKLVEYRNWS. 3 N-linked (GlcNAc...) asparagine; by host glycosylation sites follow: asparagine 61, asparagine 70, and asparagine 86. The segment at 91–469 is head of neuraminidase; sequence QCKITGFAPF…DGADINLMPI (379 aa). 8 cysteine pairs are disulfide-bonded: cysteine 92/cysteine 417, cysteine 124/cysteine 129, cysteine 183/cysteine 230, cysteine 232/cysteine 237, cysteine 278/cysteine 291, cysteine 280/cysteine 289, cysteine 318/cysteine 337, and cysteine 421/cysteine 447. Position 118 (arginine 118) interacts with substrate. N-linked (GlcNAc...) asparagine; by host glycosylation occurs at asparagine 146. Aspartate 151 (proton donor/acceptor) is an active-site residue. Arginine 152 is a binding site for substrate. Asparagine 200 and asparagine 234 each carry an N-linked (GlcNAc...) asparagine; by host glycan. Position 276–277 (276–277) interacts with substrate; sequence EE. Arginine 292 provides a ligand contact to substrate. Ca(2+)-binding residues include aspartate 293, glycine 297, and aspartate 324. Arginine 371 provides a ligand contact to substrate. Asparagine 402 carries N-linked (GlcNAc...) asparagine; by host glycosylation. Residue tyrosine 406 is the Nucleophile of the active site.

This sequence belongs to the glycosyl hydrolase 34 family. As to quaternary structure, homotetramer. Ca(2+) is required as a cofactor. Post-translationally, N-glycosylated.

The protein resides in the virion membrane. It is found in the host apical cell membrane. It catalyses the reaction Hydrolysis of alpha-(2-&gt;3)-, alpha-(2-&gt;6)-, alpha-(2-&gt;8)- glycosidic linkages of terminal sialic acid residues in oligosaccharides, glycoproteins, glycolipids, colominic acid and synthetic substrates.. Inhibited by the neuraminidase inhibitors zanamivir (Relenza) and oseltamivir (Tamiflu). These drugs interfere with the release of progeny virus from infected cells and are effective against all influenza strains. Resistance to neuraminidase inhibitors is quite rare. In terms of biological role, catalyzes the removal of terminal sialic acid residues from viral and cellular glycoconjugates. Cleaves off the terminal sialic acids on the glycosylated HA during virus budding to facilitate virus release. Additionally helps virus spread through the circulation by further removing sialic acids from the cell surface. These cleavages prevent self-aggregation and ensure the efficient spread of the progeny virus from cell to cell. Otherwise, infection would be limited to one round of replication. Described as a receptor-destroying enzyme because it cleaves a terminal sialic acid from the cellular receptors. May facilitate viral invasion of the upper airways by cleaving the sialic acid moieties on the mucin of the airway epithelial cells. Likely to plays a role in the budding process through its association with lipid rafts during intracellular transport. May additionally display a raft-association independent effect on budding. Plays a role in the determination of host range restriction on replication and virulence. Sialidase activity in late endosome/lysosome traffic seems to enhance virus replication. The sequence is that of Neuraminidase from Aves (whales).